The primary structure comprises 179 residues: Large ribosomal subunit protein uL5 (179 aa).

It belongs to the universal ribosomal protein uL5 family. As to quaternary structure, part of the 50S ribosomal subunit; part of the 5S rRNA/L5/L18/L25 subcomplex. Contacts the 5S rRNA and the P site tRNA. Forms a bridge to the 30S subunit in the 70S ribosome.

This is one of the proteins that bind and probably mediate the attachment of the 5S RNA into the large ribosomal subunit, where it forms part of the central protuberance. In the 70S ribosome it contacts protein S13 of the 30S subunit (bridge B1b), connecting the 2 subunits; this bridge is implicated in subunit movement. Contacts the P site tRNA; the 5S rRNA and some of its associated proteins might help stabilize positioning of ribosome-bound tRNAs. This chain is Large ribosomal subunit protein uL5, found in Pseudomonas syringae pv. tomato (strain ATCC BAA-871 / DC3000).